The following is a 223-amino-acid chain: MKRTKSIRHASFRKNWSARHLTPVALAVATVFMLAGCEKSDETVSLYQNADDCSAANPGKSAECTTAYNNALKEAERTAPKYATREDCVAEFGEGLCQQAPAKAGMAPENQAQAQQSSGSFWMPLMAGYMMGRLMGGGAGFAQQPLFSSKNPASPAYGKYTDATGKNYGAAQPGRTMTVPKTAMAPKPATTTTVTRGGFGESVAKQSTMQRSATGTSSRSMGG.

A compositionally biased stretch (low complexity) spans 178 to 195 (TVPKTAMAPKPATTTTVT). Residues 178 to 223 (TVPKTAMAPKPATTTTVTRGGFGESVAKQSTMQRSATGTSSRSMGG) form a disordered region. The span at 204-223 (AKQSTMQRSATGTSSRSMGG) shows a compositional bias: polar residues.

This sequence belongs to the UPF0441 family.

The chain is UPF0441 protein YgiB from Shigella dysenteriae serotype 1 (strain Sd197).